Reading from the N-terminus, the 305-residue chain is Translation initiation factor eIF2B subunit alpha (305 aa).

K35 carries the N6-acetyllysine modification.

The protein belongs to the eIF-2B alpha/beta/delta subunits family. Component of the translation initiation factor 2B (eIF2B) complex which is a heterodecamer of two sets of five different subunits: alpha, beta, gamma, delta and epsilon. Subunits alpha, beta and delta comprise a regulatory subcomplex and subunits epsilon and gamma comprise a catalytic subcomplex. Within the complex, the hexameric regulatory complex resides at the center, with the two heterodimeric catalytic subcomplexes bound on opposite sides.

The protein resides in the cytoplasm. It is found in the cytosol. Activated by the chemical integrated stress response (ISR) inhibitor ISRIB which stimulates guanine nucleotide exchange factor activity for both phosphorylated and unphosphorylated eIF2. In terms of biological role, acts as a component of the translation initiation factor 2B (eIF2B) complex, which catalyzes the exchange of GDP for GTP on eukaryotic initiation factor 2 (eIF2) gamma subunit. Its guanine nucleotide exchange factor activity is repressed when bound to eIF2 complex phosphorylated on the alpha subunit, thereby limiting the amount of methionyl-initiator methionine tRNA available to the ribosome and consequently global translation is repressed. This chain is Translation initiation factor eIF2B subunit alpha (EIF2B1), found in Pongo abelii (Sumatran orangutan).